We begin with the raw amino-acid sequence, 895 residues long: DNA double-strand break repair Rad50 ATPase (895 aa).

ATP is bound by residues 32–38 and glutamine 137; that span reads NGAGKSS. Residues 183–253 are a coiled coil; the sequence is SDYDYLKNEL…LNAQLETIKK (71 aa). In terms of domain architecture, Zinc-hook spans 411–507; the sequence is RAEINSSLMQ…ERKHQKKLLD (97 aa). Residues cysteine 455 and cysteine 458 each coordinate Zn(2+). Coiled coils occupy residues 464-510 and 618-647; these read TEKS…DRIN and ENSL…AMDE.

This sequence belongs to the SMC family. RAD50 subfamily. Homodimer. Forms a heterotetramer composed of two Mre11 subunits and two Rad50 subunits. The cofactor is Zn(2+).

Its function is as follows. Part of the Rad50/Mre11 complex, which is involved in the early steps of DNA double-strand break (DSB) repair. The complex may facilitate opening of the processed DNA ends to aid in the recruitment of HerA and NurA. Rad50 controls the balance between DNA end bridging and DNA resection via ATP-dependent structural rearrangements of the Rad50/Mre11 complex. The sequence is that of DNA double-strand break repair Rad50 ATPase from Thermoplasma volcanium (strain ATCC 51530 / DSM 4299 / JCM 9571 / NBRC 15438 / GSS1).